The following is a 189-amino-acid chain: Large ribosomal subunit protein uL10 (189 aa).

It belongs to the universal ribosomal protein uL10 family. In terms of assembly, part of the ribosomal stalk of the 50S ribosomal subunit. The N-terminus interacts with L11 and the large rRNA to form the base of the stalk. The C-terminus forms an elongated spine to which L12 dimers bind in a sequential fashion forming a multimeric L10(L12)X complex.

Its function is as follows. Forms part of the ribosomal stalk, playing a central role in the interaction of the ribosome with GTP-bound translation factors. The chain is Large ribosomal subunit protein uL10 from Rippkaea orientalis (strain PCC 8801 / RF-1) (Cyanothece sp. (strain PCC 8801)).